Consider the following 239-residue polypeptide: Phosphoribosylaminoimidazole-succinocarboxamide synthase (239 aa).

This sequence belongs to the SAICAR synthetase family.

It catalyses the reaction 5-amino-1-(5-phospho-D-ribosyl)imidazole-4-carboxylate + L-aspartate + ATP = (2S)-2-[5-amino-1-(5-phospho-beta-D-ribosyl)imidazole-4-carboxamido]succinate + ADP + phosphate + 2 H(+). Its pathway is purine metabolism; IMP biosynthesis via de novo pathway; 5-amino-1-(5-phospho-D-ribosyl)imidazole-4-carboxamide from 5-amino-1-(5-phospho-D-ribosyl)imidazole-4-carboxylate: step 1/2. This chain is Phosphoribosylaminoimidazole-succinocarboxamide synthase, found in Bacillus cereus (strain 03BB102).